Here is a 360-residue protein sequence, read N- to C-terminus: Phospho-N-acetylmuramoyl-pentapeptide-transferase (360 aa).

10 helical membrane passes run 21-41 (YVTF…LWWG), 74-94 (MGGI…GDLG), 97-117 (YVWV…IDDY), 134-154 (YILQ…SADM), 168-188 (IMPQ…VGSS), 199-219 (GLAI…AYLS), 236-256 (AGEL…FLWF), 263-283 (VFMG…IAVL), 288-308 (ILLV…ILQV), and 338-358 (VIVR…ATLK).

The protein belongs to the glycosyltransferase 4 family. MraY subfamily. The cofactor is Mg(2+).

The protein resides in the cell inner membrane. The enzyme catalyses UDP-N-acetyl-alpha-D-muramoyl-L-alanyl-gamma-D-glutamyl-meso-2,6-diaminopimeloyl-D-alanyl-D-alanine + di-trans,octa-cis-undecaprenyl phosphate = di-trans,octa-cis-undecaprenyl diphospho-N-acetyl-alpha-D-muramoyl-L-alanyl-D-glutamyl-meso-2,6-diaminopimeloyl-D-alanyl-D-alanine + UMP. It participates in cell wall biogenesis; peptidoglycan biosynthesis. Functionally, catalyzes the initial step of the lipid cycle reactions in the biosynthesis of the cell wall peptidoglycan: transfers peptidoglycan precursor phospho-MurNAc-pentapeptide from UDP-MurNAc-pentapeptide onto the lipid carrier undecaprenyl phosphate, yielding undecaprenyl-pyrophosphoryl-MurNAc-pentapeptide, known as lipid I. This Shewanella woodyi (strain ATCC 51908 / MS32) protein is Phospho-N-acetylmuramoyl-pentapeptide-transferase.